Here is a 188-residue protein sequence, read N- to C-terminus: Scytalone dehydratase (188 aa).

Positions 27, 47, and 50 each coordinate substrate. Catalysis depends on residues H82 and H107. N128 serves as a coordination point for substrate.

It belongs to the scytalone dehydratase family. In terms of assembly, homotrimer. Each subunit contains an active site, located in the central part of the hydrophobic core of the monomer, which functions independently.

It is found in the endosome. It catalyses the reaction scytalone = 1,3,8-trihydroxynaphthalene + H2O. The protein operates within pigment biosynthesis; melanin biosynthesis. Its activity is regulated as follows. Carpropamid acts as an efficient inhibitor of scytalone dehydratase activity. Scytalone dehydratase; part of the gene cluster that mediates the biosynthesis of dihydroxynaphthalene (DHN)-melanin, a bluish-green pigment and a structural component of the conidial wall. Within the pathway, catalyzes the dehydration of scytalone as well as of vermelone. This is Scytalone dehydratase from Colletotrichum orbiculare (strain 104-T / ATCC 96160 / CBS 514.97 / LARS 414 / MAFF 240422) (Cucumber anthracnose fungus).